A 201-amino-acid chain; its full sequence is Pyridoxine/pyridoxamine 5'-phosphate oxidase (201 aa).

FMN-binding positions include 49–54, 64–65, Lys-71, and Gln-93; these read RMVLLK and YT. Position 54 (Lys-54) interacts with substrate. Substrate is bound by residues Tyr-111, Arg-115, and Ser-119. Residues 128 to 129 and Trp-172 each bind FMN; that span reads QS. 178–180 contacts substrate; that stretch reads RLH. Arg-182 serves as a coordination point for FMN.

Belongs to the pyridoxamine 5'-phosphate oxidase family. Homodimer. FMN serves as cofactor.

It carries out the reaction pyridoxamine 5'-phosphate + O2 + H2O = pyridoxal 5'-phosphate + H2O2 + NH4(+). The enzyme catalyses pyridoxine 5'-phosphate + O2 = pyridoxal 5'-phosphate + H2O2. It functions in the pathway cofactor metabolism; pyridoxal 5'-phosphate salvage; pyridoxal 5'-phosphate from pyridoxamine 5'-phosphate: step 1/1. It participates in cofactor metabolism; pyridoxal 5'-phosphate salvage; pyridoxal 5'-phosphate from pyridoxine 5'-phosphate: step 1/1. Catalyzes the oxidation of either pyridoxine 5'-phosphate (PNP) or pyridoxamine 5'-phosphate (PMP) into pyridoxal 5'-phosphate (PLP). In Roseobacter denitrificans (strain ATCC 33942 / OCh 114) (Erythrobacter sp. (strain OCh 114)), this protein is Pyridoxine/pyridoxamine 5'-phosphate oxidase.